The chain runs to 498 residues: Glycerol kinase (498 aa).

T12 is a binding site for ADP. Residues T12, T13, and S14 each coordinate ATP. Sn-glycerol 3-phosphate is bound at residue T12. An ADP-binding site is contributed by R16. Positions 82, 83, 134, and 244 each coordinate sn-glycerol 3-phosphate. 5 residues coordinate glycerol: R82, E83, Y134, D244, and Q245. Residues T266 and G310 each contribute to the ADP site. Residues T266, G310, Q314, and G411 each contribute to the ATP site. Residues G411 and N415 each coordinate ADP.

Belongs to the FGGY kinase family.

It catalyses the reaction glycerol + ATP = sn-glycerol 3-phosphate + ADP + H(+). It participates in polyol metabolism; glycerol degradation via glycerol kinase pathway; sn-glycerol 3-phosphate from glycerol: step 1/1. With respect to regulation, inhibited by fructose 1,6-bisphosphate (FBP). In terms of biological role, key enzyme in the regulation of glycerol uptake and metabolism. Catalyzes the phosphorylation of glycerol to yield sn-glycerol 3-phosphate. The chain is Glycerol kinase from Chloroflexus aurantiacus (strain ATCC 29366 / DSM 635 / J-10-fl).